Consider the following 439-residue polypeptide: Ectonucleotide pyrophosphatase/phosphodiesterase family member 7 (439 aa).

An N-terminal signal peptide occupies residues 1–21 (MGHSAVLLSVALVILPACVTG). The Extracellular portion of the chain corresponds to 22 to 422 (GPVQRQQQHK…RSGSPLSRQH (401 aa)). Residues Asp38 and Thr74 each coordinate Zn(2+). Residues 71–77 (VTMTSPC) are required for enzyme activity. Residue Thr74 is the Nucleophile of the active site. Substrate is bound at residue Asn95. Asn99, Asn120, Asn145, and Asn167 each carry an N-linked (GlcNAc...) asparagine glycan. Zn(2+)-binding residues include Asp198, His202, Asp245, and His246. N-linked (GlcNAc...) asparagine glycosylation is present at Asn266. His352 provides a ligand contact to Zn(2+). A helical transmembrane segment spans residues 423–439 (HLVVVLMGILTGLAKVV).

It belongs to the nucleotide pyrophosphatase/phosphodiesterase family. Zn(2+) serves as cofactor. In terms of processing, N-glycosylated; required for activity and transport to the plasma membrane. Detected in small intestine (at protein level). Highly expressed in the jejunum.

The protein localises to the cell membrane. It carries out the reaction a sphingomyelin + H2O = phosphocholine + an N-acylsphing-4-enine + H(+). It catalyses the reaction a 1-O-alkyl-2-acetyl-sn-glycero-3-phosphocholine + H2O = a 1-O-alkyl-2-acetyl-sn-glycerol + phosphocholine + H(+). The catalysed reaction is 1-O-octadecyl-2-acetyl-sn-glycero-3-phosphocholine + H2O = 1-O-octadecyl-2-acetyl-sn-glycerol + phosphocholine + H(+). The enzyme catalyses 1-hexadecanoyl-sn-glycero-3-phosphocholine + H2O = 1-hexadecanoyl-sn-glycerol + phosphocholine + H(+). With respect to regulation, platelet-activating factor hydrolysis is inhibited by higher amount of sphingomyelin. The hydrolysis of platelet-activating factor and sphingomyelin can be inhibited by the presence of sphingomyelin and platelet-activating factor respectively, the inhibition of platelet-activating factor hydrolysis by sphingomyelin being stronger. PAF hydrolysis is dose-dependently increased by both taurocholate (TC) and taurodeoxycholate (TDC). Hydrolase activity against PAF is inhibited by EDTA and stimulated by 0.1-0.25 mM Zn2+. In terms of biological role, choline-specific phosphodiesterase that hydrolyzes sphingomyelin (SM) releasing the ceramide and phosphocholine and therefore is involved in sphingomyelin digestion, ceramide formation, and fatty acid (FA) absorption in the gastrointestinal tract. Also has phospholipase C activity and can also cleave phosphocholine from palmitoyl lyso-phosphatidylcholine and platelet-activating factor (PAF) leading to its inactivation. Does not have nucleotide pyrophosphatase activity. May promote cholesterol absorption by affecting the levels of sphingomyelin derived from either diet or endogenous sources, in the intestinal lumen. This Rattus norvegicus (Rat) protein is Ectonucleotide pyrophosphatase/phosphodiesterase family member 7.